Reading from the N-terminus, the 197-residue chain is Glycerol-3-phosphate acyltransferase (197 aa).

5 helical membrane passes run 7-27 (TLLP…LILT), 55-75 (GLAA…VLIV), 78-98 (VWPG…CFPV), 116-136 (LALA…VLFL), and 157-177 (VLGY…VLYL).

The protein belongs to the PlsY family. As to quaternary structure, probably interacts with PlsX.

The protein localises to the cell inner membrane. It catalyses the reaction an acyl phosphate + sn-glycerol 3-phosphate = a 1-acyl-sn-glycero-3-phosphate + phosphate. It participates in lipid metabolism; phospholipid metabolism. Its function is as follows. Catalyzes the transfer of an acyl group from acyl-phosphate (acyl-PO(4)) to glycerol-3-phosphate (G3P) to form lysophosphatidic acid (LPA). This enzyme utilizes acyl-phosphate as fatty acyl donor, but not acyl-CoA or acyl-ACP. This is Glycerol-3-phosphate acyltransferase from Novosphingobium aromaticivorans (strain ATCC 700278 / DSM 12444 / CCUG 56034 / CIP 105152 / NBRC 16084 / F199).